The chain runs to 360 residues: DNA integrity scanning protein DisA (360 aa).

Positions 9-147 (DNDLMDILNI…NNIKYVLRDS (139 aa)) constitute a DAC domain. ATP-binding positions include Gly-76, Leu-94, and 107-111 (TRHRT).

It belongs to the DisA family. In terms of assembly, homooctamer. Mg(2+) is required as a cofactor.

It carries out the reaction 2 ATP = 3',3'-c-di-AMP + 2 diphosphate. Its function is as follows. Participates in a DNA-damage check-point that is active prior to asymmetric division when DNA is damaged. DisA forms globular foci that rapidly scan along the chromosomes during sporulation, searching for lesions. When a lesion is present, DisA pauses at the lesion site. This triggers a cellular response that culminates in a temporary block in sporulation initiation. Also has diadenylate cyclase activity, catalyzing the condensation of 2 ATP molecules into cyclic di-AMP (c-di-AMP). c-di-AMP acts as a signaling molecule that couples DNA integrity with progression of sporulation. The rise in c-di-AMP level generated by DisA while scanning the chromosome, operates as a positive signal that advances sporulation; upon encountering a lesion, the DisA focus arrests at the damaged site and halts c-di-AMP synthesis. The protein is DNA integrity scanning protein DisA of Clostridium tetani (strain Massachusetts / E88).